The primary structure comprises 85 residues: Large ribosomal subunit protein bL27 (85 aa).

The segment at 1 to 22 (MAHKKAGGSTNNGRDSESKRLG) is disordered.

This sequence belongs to the bacterial ribosomal protein bL27 family.

The polypeptide is Large ribosomal subunit protein bL27 (Vibrio atlanticus (strain LGP32) (Vibrio splendidus (strain Mel32))).